We begin with the raw amino-acid sequence, 40 residues long: Dolichyl-diphosphooligosaccharide--protein glycosyltransferase subunit 4 (40 aa).

The Lumenal segment spans residues 1–4 (MITD). A helical transmembrane segment spans residues 5–25 (VQLAIFSNVLGVFLFLLVVAY). The Cytoplasmic portion of the chain corresponds to 26 to 40 (HYINANTGKSSIKNK).

The protein belongs to the OST4 family. As to quaternary structure, component of the oligosaccharyltransferase (OST) complex.

Its subcellular location is the endoplasmic reticulum membrane. Functionally, subunit of the oligosaccharyl transferase (OST) complex that catalyzes the initial transfer of a defined glycan (Glc(3)Man(9)GlcNAc(2) in eukaryotes) from the lipid carrier dolichol-pyrophosphate to an asparagine residue within an Asn-X-Ser/Thr consensus motif in nascent polypeptide chains, the first step in protein N-glycosylation. N-glycosylation occurs cotranslationally and the complex associates with the Sec61 complex at the channel-forming translocon complex that mediates protein translocation across the endoplasmic reticulum (ER). All subunits are required for a maximal enzyme activity. This Drosophila mojavensis (Fruit fly) protein is Dolichyl-diphosphooligosaccharide--protein glycosyltransferase subunit 4.